Reading from the N-terminus, the 433-residue chain is uncharacterized protein (433 aa).

This sequence belongs to the arrestin family.

This is an uncharacterized protein from Schizosaccharomyces pombe (strain 972 / ATCC 24843) (Fission yeast).